The chain runs to 1354 residues: MVILRYYDVQAHSAAEEESVLRRLREEDGAVVSVRMERCYHLEYSAQAEHSLALDELLVWLVKQPLSKGQSLSRQPALQSTGSSQLLLEIGPRFNFSTPYSTNCVNIFQNLGYSEVRRMETSTRYLVTFGEGSKAPEAARFVPLLGDRMTQCLYTEENTPKASFDEQLPERQANWHFVPVLEEGRAALERINQELGLAFNDYDLDYYHDLFAKELGRNPTTVELFDCAQSNSEHSRHWFFRGRMVIDGVEQPKSLIRMIMDTQAHTNPNNTIKFSDNSSAMVGFDHQTIVPSSVVAPGAVRLQSVQSDLIFTAETHNMPTAVAPFSGATTGTGGRLRDVQGVGRGGVPIAGTAGYCVGALHIPGYKQPYEPLDFKYPATFAPPLQVLIEASNGASDYGNKFGEPVISGFALSYGLNSAADASQRDEYVKPIMFSGGLGTMPATMREKLPPARGQLLAKIGGPVYRIGVGGGAASSVEIQGSGDAELDFNAVQRGDAEMENKLNRVVRACLDLGEQNPILAIHDQGAGGNGNVLKELVEPGFAGAVIFSKEFQLGDPTITALELWGAEYQENNAILCNADQRELLEKICRRERCPISFVGVVTGDGRVTLLEKPAPKDLEQALNASNRSEVSPFDLELKYVLGDMPKRTYDLKREQTPLKELSLPKGLLLDEALERVLSLVAVGSKRFLTNKVDRCVGGLIAQQQCVGPLQAPLADYALTTVSHFSHSGIATSIGTQPLKGLLDPAAMARMCVAEALSNLVFVKISELADVKCSGNWMWAAKLPGEGARMFDACKELCQILEELHIAIDGGKDSLSMAAKVGGETIKSPGTLVISTYAPCPDVRLKVTPDLKGPGAGSKTSLLWINLENSARLGGSALAQAYAQQGKDTPNLTRSDVLGKAFAVTQSLLGDGLIQAGHDVSDGGLLVCVLEMAIGGLSGLRVDLSEPLAKLKNFDKSVEKLNRPELAVLFAEECGWVVEVLDTDLERVRSTYEKAGVPNYYLGVTEGFGLDSRVVLKNGKSELLDQPLRVLYKKWERTSYELEKLQANPECAEAEYNSLEYRQAPQYRGPQNVQAELTLKRSSAPVRVAVLREEGVNSEREMMACLLRANFEVHDVTMSDLLQGTASVSQYRGLIFPGGFSYADTLGSAKGWAANILHNPRLLPQFEAFKRRQDVFSLGICNGCQLMTLIGFVGSAKSEVGADPDVALLHNKSQRFECRWATVKIPSNRSIMLGSMKDLVLGCWVAHGEGRFAFRDEKLISHLQSEQLVTLQYVDDVGKPTELYPLNPNGSPQGIAGLCSSDGRHLALMPHPERCSSMYQWPYVPSSFEVSPTQSESPWQIMFNNAYNWCVKSNQ.

Residues 327–338 (GATTGTGGRLRD), 407–409 (SGF), and Ala-714 contribute to the ATP site. Positions 715, 754, 758, and 918 each coordinate Mg(2+). ATP is bound at residue Ser-920. The 251-residue stretch at 1087–1337 (VAVLREEGVN…EVSPTQSESP (251 aa)) folds into the Glutamine amidotransferase type-1 domain. Residue Cys-1180 is the Nucleophile of the active site. Residues His-1310 and Glu-1312 contribute to the active site.

This sequence in the N-terminal section; belongs to the FGAMS family.

It carries out the reaction N(2)-formyl-N(1)-(5-phospho-beta-D-ribosyl)glycinamide + L-glutamine + ATP + H2O = 2-formamido-N(1)-(5-O-phospho-beta-D-ribosyl)acetamidine + L-glutamate + ADP + phosphate + H(+). The protein operates within purine metabolism; IMP biosynthesis via de novo pathway; 5-amino-1-(5-phospho-D-ribosyl)imidazole from N(2)-formyl-N(1)-(5-phospho-D-ribosyl)glycinamide: step 1/2. Phosphoribosylformylglycinamidine synthase involved in the purines biosynthetic pathway. Catalyzes the ATP-dependent conversion of formylglycinamide ribonucleotide (FGAR) and glutamine to yield formylglycinamidine ribonucleotide (FGAM) and glutamate. Because of its role in metabolisms, is involved in sleep regulation. In Drosophila melanogaster (Fruit fly), this protein is Phosphoribosylformylglycinamidine synthase.